Reading from the N-terminus, the 293-residue chain is Peptidoglycan deacetylase (293 aa).

Zn(2+) is bound by residues Asp-14, His-86, and His-90. The NodB homology domain maps to Pro-29–Val-276.

The protein belongs to the polysaccharide deacetylase family. In terms of assembly, homotetramer.

The enzyme catalyses Deacetylation of xylans and xylo-oligosaccharides.. Its function is as follows. Catalyzes the N-deacetylation of peptidoglycan (PG), an important mechanism that appears to confer lysozyme resistance and to mitigate host immune detection; this likely contributes to pathogen persistence in the host. The exact nature of the residue in PG that is deacetylated has not been determined. Is also able to catalyze the deacetylation of acetylated xylan, and, to a lesser extent, that of chitin and chitosan. Therefore, this enzyme might play a role during infection, considering that xylan-containing carbohydrate structures are among those commonly consumed by humans. The protein is Peptidoglycan deacetylase (pgdA) of Helicobacter pylori (strain ATCC 700392 / 26695) (Campylobacter pylori).